The sequence spans 352 residues: Nicotinate-nucleotide--dimethylbenzimidazole phosphoribosyltransferase (352 aa).

Catalysis depends on Glu318, which acts as the Proton acceptor.

The protein belongs to the CobT family.

The enzyme catalyses 5,6-dimethylbenzimidazole + nicotinate beta-D-ribonucleotide = alpha-ribazole 5'-phosphate + nicotinate + H(+). Its pathway is nucleoside biosynthesis; alpha-ribazole biosynthesis; alpha-ribazole from 5,6-dimethylbenzimidazole: step 1/2. Functionally, catalyzes the synthesis of alpha-ribazole-5'-phosphate from nicotinate mononucleotide (NAMN) and 5,6-dimethylbenzimidazole (DMB). The sequence is that of Nicotinate-nucleotide--dimethylbenzimidazole phosphoribosyltransferase from Azotobacter vinelandii (strain DJ / ATCC BAA-1303).